The chain runs to 86 residues: Putative regulatory protein Desal_2819 (86 aa).

It belongs to the RemA family.

The polypeptide is Putative regulatory protein Desal_2819 (Maridesulfovibrio salexigens (strain ATCC 14822 / DSM 2638 / NCIMB 8403 / VKM B-1763) (Desulfovibrio salexigens)).